A 300-amino-acid chain; its full sequence is E3 ubiquitin-protein ligase RNF212B (300 aa).

Residues 6–40 (CNQCFRKDGAHFFVTSCGHIFCKKCVTLEKCAVCG) form an RING-type zinc finger. Residues 87–124 (LLIAFYKHRITKLETAMQEAQQALVSQDKELSVLRKEN) are a coiled coil. Residues 141–232 (YQGSRSITPR…SYRTSSASSG (92 aa)) form a disordered region. The span at 155-165 (TSPSQSVTPRP) shows a compositional bias: polar residues. The segment covering 166–182 (SFQHSSQVVSRSSSAES) has biased composition (low complexity). Residues 191–200 (GSLGQGGRGL) are compositionally biased toward gly residues. Over residues 211–232 (NETPSPASTHSLSYRTSSASSG) the composition is skewed to polar residues.

As to quaternary structure, homodimer. In terms of processing, autoubiquitinated.

It localises to the chromosome. It catalyses the reaction S-ubiquitinyl-[E2 ubiquitin-conjugating enzyme]-L-cysteine + [acceptor protein]-L-lysine = [E2 ubiquitin-conjugating enzyme]-L-cysteine + N(6)-ubiquitinyl-[acceptor protein]-L-lysine.. It participates in protein modification; protein ubiquitination. In terms of biological role, ubiquitin E3 ligase that acts as a crucial factor for crossing-over (CO) formation during meiosis. Essential for normal prophase I progression and for ensuring appropriate CO designation in meiosis. Recruits key components of the cross-over machinery either directly ou indirectly, leading to the activation of the MutL-gamma complex. The function of RNF212B in CO designation is dependent on its catalytic activity. The chain is E3 ubiquitin-protein ligase RNF212B (RNF212B) from Homo sapiens (Human).